The sequence spans 242 residues: uncharacterized protein (242 aa).

Residues 1–17 (MKFSPAYLLAFAPIVAA) form the signal peptide. 5 N-linked (GlcNAc...) asparagine glycosylation sites follow: asparagine 47, asparagine 86, asparagine 122, asparagine 159, and asparagine 178. Residues 176-214 (NANESTADGQAQSGSSGSSSDSGSHSGHSSATQTSSTTA) are disordered. The span at 180–214 (STADGQAQSGSSGSSSDSGSHSGHSSATQTSSTTA) shows a compositional bias: low complexity. Alanine 218 carries GPI-like-anchor amidated alanine lipidation. Positions 219–242 (GAVALETAAWGILGAAVVGGLAVL) are cleaved as a propeptide — removed in mature form.

The GPI-like anchor contains a phosphoceramide lipid group. The anchor position has not been determined.

Its subcellular location is the cell membrane. This is an uncharacterized protein from Aspergillus fumigatus (strain ATCC MYA-4609 / CBS 101355 / FGSC A1100 / Af293) (Neosartorya fumigata).